Here is a 338-residue protein sequence, read N- to C-terminus: Replication factor C small subunit (338 aa).

Gly53 to Thr60 is a binding site for ATP.

It belongs to the activator 1 small subunits family. RfcS subfamily. In terms of assembly, heteromultimer composed of small subunits (RfcS) and large subunits (RfcL).

In terms of biological role, part of the RFC clamp loader complex which loads the PCNA sliding clamp onto DNA. This is Replication factor C small subunit from Methanosarcina acetivorans (strain ATCC 35395 / DSM 2834 / JCM 12185 / C2A).